The chain runs to 790 residues: Solute carrier family 26 member 9 (790 aa).

The Cytoplasmic portion of the chain corresponds to Met-1 to Tyr-70. A helical membrane pass occupies residues Ile-71–Ala-96. Topologically, residues Asn-97–Ala-100 are extracellular. A helical membrane pass occupies residues Val-101–Phe-109. Residues Pro-110–Ala-129 are Cytoplasmic-facing. A helical transmembrane segment spans residues Val-130–Leu-142. Residues Ala-143 to Thr-162 lie on the Extracellular side of the membrane. A helical membrane pass occupies residues Ala-163–Gln-191. Over Phe-192–Glu-201 the chain is Cytoplasmic. A helical membrane pass occupies residues Ser-202–Phe-224. Over Gly-225–Ile-237 the chain is Extracellular. Residues Val-238–Lys-246 constitute an intramembrane region (helical). Over Asn-247–Ala-254 the chain is Extracellular. A helical transmembrane segment spans residues Ser-255–Arg-275. Over Tyr-276–Thr-286 the chain is Cytoplasmic. The chain crosses the membrane as a helical span at residues Glu-287 to Gly-299. The Extracellular portion of the chain corresponds to Ser-300–Val-334. The chain crosses the membrane as a helical span at residues Gly-335–Lys-358. Residues His-359 to Ser-365 lie on the Cytoplasmic side of the membrane. Residues Asn-366–Gly-379 form a helical membrane-spanning segment. Residues Ser-380–Ala-390 are Extracellular-facing. Residues Leu-391 to Ala-400 traverse the membrane as a helical segment. At Gly-401 to Gln-405 the chain is on the cytoplasmic side. The chain crosses the membrane as a helical span at residues Val-406–Met-419. Residues Leu-420–Lys-431 lie on the Extracellular side of the membrane. Residues Ala-432–Arg-457 form a helical membrane-spanning segment. The Cytoplasmic segment spans residues Lys-458–Leu-461. Residues Asp-462 to Leu-476 traverse the membrane as a helical segment. Residues Ser-477–Pro-479 lie on the Extracellular side of the membrane. A helical transmembrane segment spans residues Tyr-480–Gln-498. Residues Phe-499–Leu-790 are Cytoplasmic-facing. In terms of domain architecture, STAS spans Thr-519–Ala-737.

Belongs to the SLC26A/SulP transporter (TC 2.A.53) family. In terms of assembly, homodimer. Expressed in stomach and trachea. Abundantly expressed in the apical domain of the surface epithelial cells and the deep cells in the gastric gland. Also expressed in heart, brain, lung and liver.

The protein localises to the cell membrane. The protein resides in the endomembrane system. It carries out the reaction chloride(in) = chloride(out). The catalysed reaction is hydrogencarbonate(in) + chloride(out) = hydrogencarbonate(out) + chloride(in). Its activity is regulated as follows. Inhibited by ammonium and thiosulfate. Ion transporter that can act both as an ion channel and anion exchanger. Mainly acts as a chloride channel, which mediate uncoupled chloride anion transport in an alternate-access mechanism where a saturable binding site is alternately exposed to either one or the other side of the membrane. Also acts as a DIDS- and thiosulfate- sensitive anion exchanger the exchange of chloride for bicarbonate ions across the cell membrane. In Mus musculus (Mouse), this protein is Solute carrier family 26 member 9.